Consider the following 505-residue polypeptide: Methylmalonyl-CoA carboxyltransferase 5S subunit (505 aa).

Positions 14-276 (VGITELVLRD…TTNLDYDRLH (263 aa)) constitute a Pyruvate carboxyltransferase domain. Substrate is bound by residues 22 to 26 (RDAHQ), A59, and K184. D23 provides a ligand contact to Co(2+). Co(2+)-binding residues include K184, H215, and H217. Position 184 is an N6-carboxylysine; partial (K184).

As to quaternary structure, homodimer. Transcarboxylase is composed of three subunits: 1.3S, 5S, and 12S. The core of the enzyme is composed of six 12S subunits. On each side of the core there are three pairs of 5S subunits. Each 5S dimer is attached to the core by two 1.3S subunits. Thus the total number of chains is 30 (6 + 12 + 12). The cofactor is Co(2+). In terms of processing, lys-184 is carboxylated in the free enzyme and helps to coordinate the cobalt ion. Lys-184 is partially carboxylated in the complex with pyruvate, but is not carboxylated in the oxaloacetate-bound form.

It carries out the reaction (S)-methylmalonyl-CoA + pyruvate = propanoyl-CoA + oxaloacetate. The 5S subunit specifically catalyzes the transfer of the carboxyl group from biotin of the 1.3S subunit to pyruvate to form oxaloacetate and 1.3S biotin. In Propionibacterium freudenreichii subsp. shermanii, this protein is Methylmalonyl-CoA carboxyltransferase 5S subunit.